A 57-amino-acid chain; its full sequence is Large ribosomal subunit protein bL32 (57 aa).

Belongs to the bacterial ribosomal protein bL32 family.

The protein is Large ribosomal subunit protein bL32 of Staphylococcus haemolyticus (strain JCSC1435).